We begin with the raw amino-acid sequence, 52 residues long: Defensin D2 (52 aa).

Intrachain disulfides connect C8–C52, C19–C39, C25–C46, and C29–C48.

As to expression, distributed in the epidermal cell layer of leaves and in the subepidermal layer region of stems. Not in roots.

The protein localises to the secreted. The protein resides in the cell wall. In terms of biological role, antimicrobial peptide. Active against Fusarium spp., Gram-positive and Gram-negative bacterial pathogens. In Spinacia oleracea (Spinach), this protein is Defensin D2.